The following is a 403-amino-acid chain: Pantothenate kinase (403 aa).

Phosphoserine is present on residues Ser-80, Ser-82, and Ser-84.

Belongs to the type II pantothenate kinase family.

The protein localises to the cytoplasm. The protein resides in the nucleus. It carries out the reaction (R)-pantothenate + ATP = (R)-4'-phosphopantothenate + ADP + H(+). Its pathway is cofactor biosynthesis; coenzyme A biosynthesis; CoA from (R)-pantothenate: step 1/5. With respect to regulation, regulated by feedback inhibition by malonyl-CoA. In terms of biological role, plays a role in the physiological regulation of the intracellular CoA concentration. This is Pantothenate kinase from Schizosaccharomyces pombe (strain 972 / ATCC 24843) (Fission yeast).